The chain runs to 192 residues: Probable chorismate pyruvate-lyase (192 aa).

Substrate is bound by residues Arg-85, Leu-120, and Glu-176.

It belongs to the UbiC family.

The protein localises to the cytoplasm. It carries out the reaction chorismate = 4-hydroxybenzoate + pyruvate. Its pathway is cofactor biosynthesis; ubiquinone biosynthesis. Removes the pyruvyl group from chorismate, with concomitant aromatization of the ring, to provide 4-hydroxybenzoate (4HB) for the ubiquinone pathway. The chain is Probable chorismate pyruvate-lyase from Pseudoalteromonas atlantica (strain T6c / ATCC BAA-1087).